We begin with the raw amino-acid sequence, 200 residues long: MYEYIKGTLTHINESYVVIESFGIGYAIMLSERFSVDLRAFMHQEVLIYVHSVIRETEHVLYGFSSRAEKECFRLLISFSGIGPKTGLSILNMFPLQELCSIARLENVKAIASVPGIGKKTAEKLMVDLKQKLPTLMPLYLEEPVVPSSTANSSFKEGIGALMNLGFSRLAADRMMTEAVKELSEEASVAELLPIALRKS.

The tract at residues methionine 1 to serine 65 is domain I. The tract at residues serine 66–proline 144 is domain II. Residues valine 145–serine 149 form a flexible linker region. The segment at threonine 150–serine 200 is domain III.

This sequence belongs to the RuvA family. Homotetramer. Forms an RuvA(8)-RuvB(12)-Holliday junction (HJ) complex. HJ DNA is sandwiched between 2 RuvA tetramers; dsDNA enters through RuvA and exits via RuvB. An RuvB hexamer assembles on each DNA strand where it exits the tetramer. Each RuvB hexamer is contacted by two RuvA subunits (via domain III) on 2 adjacent RuvB subunits; this complex drives branch migration. In the full resolvosome a probable DNA-RuvA(4)-RuvB(12)-RuvC(2) complex forms which resolves the HJ.

The protein resides in the cytoplasm. Its function is as follows. The RuvA-RuvB-RuvC complex processes Holliday junction (HJ) DNA during genetic recombination and DNA repair, while the RuvA-RuvB complex plays an important role in the rescue of blocked DNA replication forks via replication fork reversal (RFR). RuvA specifically binds to HJ cruciform DNA, conferring on it an open structure. The RuvB hexamer acts as an ATP-dependent pump, pulling dsDNA into and through the RuvAB complex. HJ branch migration allows RuvC to scan DNA until it finds its consensus sequence, where it cleaves and resolves the cruciform DNA. This Chlamydia trachomatis serovar A (strain ATCC VR-571B / DSM 19440 / HAR-13) protein is Holliday junction branch migration complex subunit RuvA.